The sequence spans 469 residues: UDP-N-acetylmuramate--L-alanine ligase (469 aa).

122–128 contributes to the ATP binding site; that stretch reads GTHGKTT.

This sequence belongs to the MurCDEF family.

The protein resides in the cytoplasm. The catalysed reaction is UDP-N-acetyl-alpha-D-muramate + L-alanine + ATP = UDP-N-acetyl-alpha-D-muramoyl-L-alanine + ADP + phosphate + H(+). The protein operates within cell wall biogenesis; peptidoglycan biosynthesis. In terms of biological role, cell wall formation. The chain is UDP-N-acetylmuramate--L-alanine ligase from Legionella pneumophila subsp. pneumophila (strain Philadelphia 1 / ATCC 33152 / DSM 7513).